Here is a 166-residue protein sequence, read N- to C-terminus: UPF0336 protein Mb0656 (166 aa).

The protein belongs to the UPF0336 family.

In Mycobacterium bovis (strain ATCC BAA-935 / AF2122/97), this protein is UPF0336 protein Mb0656.